Consider the following 237-residue polypeptide: Ribonuclease 3 (237 aa).

The RNase III domain occupies 4 to 133 (LTELENSLGV…VLAAIYIDKG (130 aa)). E46 serves as a coordination point for Mg(2+). Active-site residues include D50 and E122. E122 lines the Mg(2+) pocket. The 70-residue stretch at 160 to 229 (DYKSRLQELI…AKVALQQFEN (70 aa)) folds into the DRBM domain.

The protein belongs to the ribonuclease III family. Homodimer. The cofactor is Mg(2+).

The protein resides in the cytoplasm. It carries out the reaction Endonucleolytic cleavage to 5'-phosphomonoester.. Digests double-stranded RNA. Involved in the processing of primary rRNA transcript to yield the immediate precursors to the large and small rRNAs (23S and 16S). Processes some mRNAs, and tRNAs when they are encoded in the rRNA operon. Processes pre-crRNA and tracrRNA of type II CRISPR loci if present in the organism. The sequence is that of Ribonuclease 3 from Dehalococcoides mccartyi (strain CBDB1).